We begin with the raw amino-acid sequence, 407 residues long: Imidazolonepropionase (407 aa).

Fe(3+) contacts are provided by H74 and H76. Residues H74 and H76 each contribute to the Zn(2+) site. 4-imidazolone-5-propanoate-binding residues include R83, Y146, and H179. Position 146 (Y146) interacts with N-formimidoyl-L-glutamate. Position 244 (H244) interacts with Fe(3+). A Zn(2+)-binding site is contributed by H244. A 4-imidazolone-5-propanoate-binding site is contributed by Q247. D319 lines the Fe(3+) pocket. Residue D319 participates in Zn(2+) binding. The N-formimidoyl-L-glutamate site is built by N321 and G323. T324 contacts 4-imidazolone-5-propanoate.

Belongs to the metallo-dependent hydrolases superfamily. HutI family. It depends on Zn(2+) as a cofactor. Requires Fe(3+) as cofactor.

The protein resides in the cytoplasm. It carries out the reaction 4-imidazolone-5-propanoate + H2O = N-formimidoyl-L-glutamate. Its pathway is amino-acid degradation; L-histidine degradation into L-glutamate; N-formimidoyl-L-glutamate from L-histidine: step 3/3. In terms of biological role, catalyzes the hydrolytic cleavage of the carbon-nitrogen bond in imidazolone-5-propanoate to yield N-formimidoyl-L-glutamate. It is the third step in the universal histidine degradation pathway. The sequence is that of Imidazolonepropionase from Salmonella schwarzengrund (strain CVM19633).